Consider the following 34-residue polypeptide: Mu-theraphotoxin-Pspp1 (34 aa).

Cystine bridges form between C2-C17, C9-C22, and C16-C29. Phenylalanine amide is present on F34.

It belongs to the neurotoxin 10 (Hwtx-1) family. In terms of tissue distribution, expressed by the venom gland.

Its subcellular location is the secreted. Its function is as follows. Voltage-gated sodium channel inhibitor. It is unclear if it selectively inhibits Nav1.7/SCN9A or shows similar potency on all sodium channels tested. According to Escoubas et al., 2006 and Nicolas et al., 2019, it is selective over Nav1.7/SCN9A (90% inhibition at 1 uM), versus Nav1.4 and Nav1.6 (35% inhibition), and shows a small inhibition on all other sodium channels (except Nav1.8/SCN10A). According to Goncalves et al., 2019, it shows a similar inhibition on almost all sodium channels tested (Nav1.1/SCN1A (IC(50)=280.3 nM), Nav1.2/SCN2A (IC(50)=73.7 nM), Nav1.3/SCN3A (IC(50)=201.5 nM), Nav1.4/SCN4A (IC(50)&gt;2100 nM), Nav1.5/SCN5A (IC(50)=710.6 nM), Nav1.6/SCN8A (IC(50)=491.2 nM), and Nav1.7/SCN9A (IC(50)=254.3-260 nM)), except Nav1.8/SCN10A. The voltage-dependence of steady-state Nav1.7/SCN9A channel activation and inactivation are not affected, suggesting that is does not act as a gating-modifier toxin but rather blocks or impedes ion flux through the channel pore. The toxin effect is partial and poorly reversible. In addition to its inhibition to sodium channels, it also shows a small inhibition on rat Kv3.4/KCNC4 potassium channels (20% inhibition at 1 uM). In vivo, when tested on pain models, it shows analgesic activity. The protein is Mu-theraphotoxin-Pspp1 of Phlogiellus sp. (Tarantula).